Reading from the N-terminus, the 561-residue chain is Glucose-6-phosphate isomerase (561 aa).

Catalysis depends on E366, which acts as the Proton donor. Active-site residues include H397 and K525.

It belongs to the GPI family.

The protein resides in the cytoplasm. The enzyme catalyses alpha-D-glucose 6-phosphate = beta-D-fructose 6-phosphate. It functions in the pathway carbohydrate degradation; glycolysis; D-glyceraldehyde 3-phosphate and glycerone phosphate from D-glucose: step 2/4. This Dictyostelium discoideum (Social amoeba) protein is Glucose-6-phosphate isomerase (gpi).